The chain runs to 972 residues: Mast/stem cell growth factor receptor Kit (972 aa).

The signal sequence occupies residues 1–25 (MRGARGAWDFLCVLLLLLRVQTGSS). The Extracellular segment spans residues 26–520 (QPSVSPEEAS…QIQPHTLFTP (495 aa)). Ig-like C2-type domains are found at residues 27–112 (PSVS…VFVR), 121–205 (DRSL…LKVR), 212–308 (PVVS…LEVV), 317–410 (PMIN…VYVN), and 413–507 (PEIL…FNFA). The cysteines at positions 58 and 97 are disulfide-linked. Residues N130 and N145 are each glycosylated (N-linked (GlcNAc...) asparagine). 3 disulfides stabilise this stretch: C136–C186, C151–C183, and C233–C290. N283, N300, N320, N352, N367, N463, and N486 each carry an N-linked (GlcNAc...) asparagine glycan. C428 and C491 are joined by a disulfide. A helical transmembrane segment spans residues 521-541 (LLIGFVVVAGMMCIIVMILTY). At 542-972 (KYLQKPMYEV…SQPLLVRDDV (431 aa)) the chain is on the cytoplasmic side. Phosphotyrosine is present on residues Y543 and Y549. Y564 provides a ligand contact to Mg(2+). Phosphotyrosine; by autocatalysis occurs at positions 564 and 566. The interval 564–566 (YVY) is important for interaction with phosphotyrosine-binding proteins. The Protein kinase domain occupies 585–933 (LSFGKTLGAG…ISESTNHIYS (349 aa)). ATP contacts are provided by residues 592–599 (GAGAFGKV), K619, and 667–673 (EYCCYGD). Y699 and Y717 each carry phosphotyrosine; by autocatalysis. A Phosphotyrosine modification is found at Y726. 2 positions are modified to phosphoserine; by PKC/PRKCA: S737 and S742. The Proton acceptor role is filled by D788. R792 lines the ATP pocket. 2 residues coordinate Mg(2+): N793 and D806. S817 is subject to Phosphoserine. Y819 carries the post-translational modification Phosphotyrosine; by autocatalysis. Phosphoserine is present on S887. Phosphotyrosine is present on Y896. Y932 bears the Phosphotyrosine; by autocatalysis mark. Phosphoserine is present on S955.

Belongs to the protein kinase superfamily. Tyr protein kinase family. CSF-1/PDGF receptor subfamily. As to quaternary structure, monomer in the absence of bound KITLG/SCF. Homodimer in the presence of bound KITLG/SCF, forming a heterotetramer with two KITLG/SCF molecules. Interacts (via phosphorylated tyrosine residues) with the adapter proteins GRB2 and GRB7 (via SH2 domain), and SH2B2/APS. Interacts (via C-terminus) with MPDZ (via the tenth PDZ domain). Interacts (via phosphorylated tyrosine residues) with PIK3R1 and PIK3CD. Interacts (via phosphorylated tyrosine) with CRK (isoform Crk-II), FYN, SHC1 and MATK/CHK (via SH2 domain). Interacts with LYN and FES/FPS. Interacts (via phosphorylated tyrosine residues) with the protein phosphatases PTPN6/SHP-1 (via SH2 domain), PTPN11/SHP-2 (via SH2 domain) and PTPRU. Interacts with PLCG1. Interacts with DOK1 and TEC. Interacts with IL1RAP (independent of stimulation with KITLG/SCF). A mast cell-specific KITLG/SCF-induced interleukin-33 signaling complex contains IL1RL1, IL1RAP, KIT and MYD88. In terms of processing, ubiquitinated by SOCS6. KIT is rapidly ubiquitinated after autophosphorylation induced by KITLG/SCF binding, leading to internalization and degradation. Autophosphorylated on tyrosine residues. KITLG/SCF binding promotes autophosphorylation. Phosphorylated tyrosine residues are important for interaction with specific binding partners.

It is found in the cell membrane. It catalyses the reaction L-tyrosyl-[protein] + ATP = O-phospho-L-tyrosyl-[protein] + ADP + H(+). With respect to regulation, present in an inactive conformation in the absence of bound ligand. KITLG/SCF binding leads to dimerization and activation by autophosphorylation on tyrosine residues. Activity is down-regulated by PRKCA-mediated phosphorylation on serine residues. In terms of biological role, tyrosine-protein kinase that acts as a cell-surface receptor for the cytokine KITLG/SCF and plays an essential role in the regulation of cell survival and proliferation, hematopoiesis, stem cell maintenance, gametogenesis, mast cell development, migration and function, and in melanogenesis. In response to KITLG/SCF binding, KIT can activate several signaling pathways. Phosphorylates PIK3R1, PLCG1, SH2B2/APS and CBL. Activates the AKT1 signaling pathway by phosphorylation of PIK3R1, the regulatory subunit of phosphatidylinositol 3-kinase. Activated KIT also transmits signals via GRB2 and activation of RAS, RAF1 and the MAP kinases MAPK1/ERK2 and/or MAPK3/ERK1. Promotes activation of STAT family members STAT1, STAT3, STAT5A and STAT5B. Activation of PLCG1 leads to the production of the cellular signaling molecules diacylglycerol and inositol 1,4,5-trisphosphate. KIT signaling is modulated by protein phosphatases, and by rapid internalization and degradation of the receptor. Activated KIT promotes phosphorylation of the protein phosphatases PTPN6/SHP-1 and PTPRU, and of the transcription factors STAT1, STAT3, STAT5A and STAT5B. Promotes phosphorylation of PIK3R1, CBL, CRK (isoform Crk-II), LYN, MAPK1/ERK2 and/or MAPK3/ERK1, PLCG1, SRC and SHC1. The chain is Mast/stem cell growth factor receptor Kit (KIT) from Callithrix jacchus (White-tufted-ear marmoset).